The sequence spans 1597 residues: MGVPTKISILGRESIVADFGIWRNYVAKDLLNSCSSSTYILISDTNITPLYLDGFQKSFDDAAANLSPKPRLLTYEIPPGESSKSRETKAGIEDWMLTRQPPCGRDTVIIALGGGVIGDLIGFVAATYMRGVRFVQVPTTLLAMVDSSIGGKTAIDTPNGKNLIGAIWQPQRIYLDMEFLNTLPEREFINGMAEVIKTAAISSEEKFAALEDDAEIILAAVKSKNTPERPRFSGIEETLKRTILSSAEFKAQVVSADEREGGLRNLLNFGHSIGHAIEAILAPQVLHGECVAIGMVKEAELARHLGILNNVSVSRISKCLASYGLPTSLKDERIRKLTADKHCSVEQLITYMGVDKKNDGPKKKVVLLSAIGRTHEPRASTVSNEEIQIVLAPSIEVSPGVPKNLNVTCTPPGSKSISNRALVLAALGSGTCRLKNLLHSDDTEVMLNALERLGAATFSWENEGEVLVVNGKGGKMKASPDELYLGNAGTASRFLTTVATLAQKSSVDSSVLTGNARMKQRPIGDLVDALAANGAGVEYLENSGSLPLKIAASGGFAGGEINLAAKVSSQYVSSLLMCAPYAKKPVTLRLVGGKPISQTYIDMTTTMMRSFGIDVKKSETEEHTYHIPLGFYISPAEYIVESDASSSTYPLAVAAITGTSCTVPNIGSKSLQGDARFAVEVLRPMGCTVDQKDFSTTVTGPANGILRPLPNVDMEPMTDAFLTASVLAAVARGGGSNHTTRIFGIANQRVKECNRIKAMKDELAKFGVTCREHDDGLEIDGIDRSTLRHPSDGVYCYDDHRVAMSFSVLSLVAPQPTLILEKECVGKTWPGWWDSLAQTFKVKLDGKEVEKKTGRGGIVHLDKPAASIFIIGMRGAGKTTSGVWVSKALQRPFIDLDDELERTEGMTIPEIIKQRGWEGFREAELSLLRRVMTEKPTRYIFACGGGIVETPEARKLLIQYHKTKGNVILVMRDIKEIMDFLKIDKTRPAYVEDMMSVWLRRKPWYQECSNVQYFSRLTGLDGMAQVLGGFNRFLKVITGQVDSLAQMRSKENTFFVSLTLPDLAPAAPILKEVTLGSDAVELRVDLLKDPQSDSEIPSVDYVAEQISVLRSRTSVPLVFTIRTKAQGGRFPDDAYDAALQLYRLAIRMGSEFVDLEISFPEQLLRTVTEMKGFSKIIASHHDPKGELSWANGSWIQFYNKALQYGDVIKLVGVARSLDDNASLKKFKTWAEEKHDVPIIAINMGDKGQLSRMLNGFMTPVSHPSLPFKAAPGQLSAREIRKGLSLIGEIKSKKFAVIGNPVSASRSPAMHNALFRQMGLPHIYGTLETEDPEIVKKFIRSPDFGGASITIPLKLDIMPLLDEIAPEAVSIGAVNTIVCAPPAPDDQSQAPRLIGRNTDWQGMVRCLSDAGAYPAATPTTTSAGLVIGGGGTARAAIFALQSMGYSPIYVVGRSPDKLSSMTSTFAPDHDIRILEDVKALESLPTVAIGTIPGDKPIEPHMREILCELFDLCEKANSDAEQARGISTKRILLEMAYKPSVTSLMQLASDSGWTVLPGLEALVAQGVYQCEYWTDITPVYEDARNAVMGVQPKDDDIST.

A 3-dehydroquinate synthase region spans residues 1–384 (MGVPTKISIL…HEPRASTVSN (384 aa)). NAD(+) is bound by residues 44–46 (DTN), 81–84 (ESSK), 114–116 (GGV), and D119. Position 130 (R130) interacts with 7-phospho-2-dehydro-3-deoxy-D-arabino-heptonate. 139-140 (TT) serves as a coordination point for NAD(+). The 7-phospho-2-dehydro-3-deoxy-D-arabino-heptonate site is built by D146 and K152. K161 serves as a coordination point for NAD(+). A 7-phospho-2-dehydro-3-deoxy-D-arabino-heptonate-binding site is contributed by N162. Residues 179-182 (FLNT) and N190 each bind NAD(+). E194 is a binding site for Zn(2+). Residues 194-197 (EVIK) and K250 contribute to the 7-phospho-2-dehydro-3-deoxy-D-arabino-heptonate site. E260 acts as the Proton acceptor; for 3-dehydroquinate synthase activity in catalysis. 7-phospho-2-dehydro-3-deoxy-D-arabino-heptonate-binding positions include 264–268 (RNLLN) and H271. H271 is a Zn(2+) binding site. H275 (proton acceptor; for 3-dehydroquinate synthase activity) is an active-site residue. 7-phospho-2-dehydro-3-deoxy-D-arabino-heptonate is bound by residues H287 and K356. Zn(2+) is bound at residue H287. The EPSP synthase stretch occupies residues 397–842 (VSPGVPKNLN…WDSLAQTFKV (446 aa)). The active-site For EPSP synthase activity is the C824. The shikimate kinase stretch occupies residues 866–1057 (ASIFIIGMRG…RSKENTFFVS (192 aa)). 872–879 (GMRGAGKT) contributes to the ATP binding site. The segment at 1058–1278 (LTLPDLAPAA…AAPGQLSARE (221 aa)) is 3-dehydroquinase. H1181 functions as the Proton acceptor; for 3-dehydroquinate dehydratase activity in the catalytic mechanism. The active-site Schiff-base intermediate with substrate; for 3-dehydroquinate dehydratase activity is K1209. The tract at residues 1291–1597 (SKKFAVIGNP…VQPKDDDIST (307 aa)) is shikimate dehydrogenase.

This sequence in the N-terminal section; belongs to the sugar phosphate cyclases superfamily. Dehydroquinate synthase family. The protein in the 2nd section; belongs to the EPSP synthase family. In the 3rd section; belongs to the shikimate kinase family. It in the 4th section; belongs to the type-I 3-dehydroquinase family. This sequence in the C-terminal section; belongs to the shikimate dehydrogenase family. Homodimer. It depends on Zn(2+) as a cofactor.

The protein localises to the cytoplasm. It catalyses the reaction 7-phospho-2-dehydro-3-deoxy-D-arabino-heptonate = 3-dehydroquinate + phosphate. It carries out the reaction 3-dehydroquinate = 3-dehydroshikimate + H2O. The catalysed reaction is shikimate + NADP(+) = 3-dehydroshikimate + NADPH + H(+). The enzyme catalyses shikimate + ATP = 3-phosphoshikimate + ADP + H(+). It catalyses the reaction 3-phosphoshikimate + phosphoenolpyruvate = 5-O-(1-carboxyvinyl)-3-phosphoshikimate + phosphate. It participates in metabolic intermediate biosynthesis; chorismate biosynthesis; chorismate from D-erythrose 4-phosphate and phosphoenolpyruvate: step 2/7. The protein operates within metabolic intermediate biosynthesis; chorismate biosynthesis; chorismate from D-erythrose 4-phosphate and phosphoenolpyruvate: step 3/7. It functions in the pathway metabolic intermediate biosynthesis; chorismate biosynthesis; chorismate from D-erythrose 4-phosphate and phosphoenolpyruvate: step 4/7. Its pathway is metabolic intermediate biosynthesis; chorismate biosynthesis; chorismate from D-erythrose 4-phosphate and phosphoenolpyruvate: step 5/7. It participates in metabolic intermediate biosynthesis; chorismate biosynthesis; chorismate from D-erythrose 4-phosphate and phosphoenolpyruvate: step 6/7. Functionally, the AROM polypeptide catalyzes 5 consecutive enzymatic reactions in prechorismate polyaromatic amino acid biosynthesis. This Ajellomyces dermatitidis (strain ER-3 / ATCC MYA-2586) (Blastomyces dermatitidis) protein is Pentafunctional AROM polypeptide.